Reading from the N-terminus, the 243-residue chain is Pyrimidodiazepine synthase (243 aa).

Positions 20–102 constitute a GST N-terminal domain; it reads GILRLYSMRF…YLDEQYPLRP (83 aa). Cys30 serves as the catalytic Nucleophile. Glutathione-binding positions include Lys57, Val70, and 86-87; that span reads ES. Residues 107–230 form the GST C-terminal domain; it reads DPLKKVQDKL…VQAEFLRTRS (124 aa).

Belongs to the GST superfamily. Omega family. In terms of assembly, homodimer.

The enzyme catalyses 2-amino-6-acetyl-3,7,8,9-tetrahydro-3H-pyrimido[4,5-b][1,4]diazepin-4-one + glutathione disulfide + H2O = 6-pyruvoyl-5,6,7,8-tetrahydropterin + 2 glutathione. Functionally, mediates the conversion of 2-amino-4-oxo-6-pyruvoyl-5,6,7,8-tetrahydropteridine (6-PTP; also named 6-pyruvoyltetrahydropterin) to 2-amino-6-acetyl-3,7,8,9-tetrahydro-3H-pyrimido(4,5-b)[1,4]diazepin-4-one (pyrimidodiazepine or PDA), a key intermediate in red eye pigment drosopterin biosynthesis. In Drosophila melanogaster (Fruit fly), this protein is Pyrimidodiazepine synthase.